The sequence spans 798 residues: Palmitoyl thioesterase CPT1C (798 aa).

Residues 1 to 52 (MAEAHQASSLLSSLSSDGAEVELSSPVWQEIYLCALRSWKRHLWRVWNDFLA) are Cytoplasmic-facing. A helical transmembrane segment spans residues 53–75 (GVVPATPLSWLFLFSTIQLACLL). Residues 76–103 (QLDPSLGLMEKIKELLPDWGGQHHQLQG) are Lumenal-facing. The helical transmembrane segment at 104 to 126 (FLSAAVFASCLWGALIFTLHVAL) threads the bilayer. Residues 127-798 (RLLLSHHGWL…PNTPTSSTNL (672 aa)) are Cytoplasmic-facing. Residue histidine 469 is the Proton acceptor of the active site. 551-563 (GKSFIKCCHVSSD) is a CoA binding site. (R)-carnitine is bound by residues tyrosine 585, serine 587, and threonine 598. The segment at 759–798 (LFRVGQHFKRQFRGENSDYRYNFLSCKTVDPNTPTSSTNL) is required for interaction with GRIA1.

It belongs to the carnitine/choline acetyltransferase family. As to quaternary structure, peripherally associated with AMPAR complex. AMPAR complex consists of an inner core made of 4 pore-forming GluA/GRIA proteins (GRIA1, GRIA2, GRIA3 and GRIA4) and 4 major auxiliary subunits arranged in a twofold symmetry. One of the two pairs of distinct binding sites is occupied either by CNIH2, CNIH3 or CACNG2, CACNG3. The other harbors CACNG2, CACNG3, CACNG4, CACNG8 or GSG1L. This inner core of AMPAR complex is complemented by outer core constituents binding directly to the GluA/GRIA proteins at sites distinct from the interaction sites of the inner core constituents. Outer core constituents include at least PRRT1, PRRT2, CKAMP44/SHISA9, FRRS1L and NRN1. The proteins of the inner and outer core serve as a platform for other, more peripherally associated AMPAR constituents, including CPT1C. Alone or in combination, these auxiliary subunits control the gating and pharmacology of the AMPAR complex and profoundly impact their biogenesis and protein processing. Interacts with SACM1L; the interaction regulates SACM1L phosphatidylinositol-3-phosphatase activity and translocation to endoplasmic reticulum/trans Golgi network in a malonyl-CoA dependent manner. Interacts with ATL1. Predominantly expressed in brain (at protein level) and testis, highly expressed in the hippocampus, amygdala and cerebellum. Expressed in neurons but not astrocytes. Expressed in the ventral horn from spinal cords.

It localises to the synapse. It is found in the cell projection. Its subcellular location is the axon. The protein localises to the dendrite. The protein resides in the dendritic spine. It localises to the endoplasmic reticulum membrane. The enzyme catalyses S-hexadecanoyl-L-cysteinyl-[protein] + H2O = L-cysteinyl-[protein] + hexadecanoate + H(+). Palmitoyl thioesterase specifically expressed in the endoplasmic reticulum of neurons. Modulates the trafficking of the glutamate receptor, AMPAR, to plasma membrane through depalmitoylation of GRIA1. Also regulates AMPR trafficking through the regulation of SACM1L phosphatidylinositol-3-phosphatase activity by interaction in a malonyl-CoA dependent manner. Binds malonyl-CoA and couples malonyl-CoA to ceramide levels, necessary for proper spine maturation and contributing to systemic energy homeostasis and appetite control. Binds to palmitoyl-CoA, but does not have carnitine palmitoyltransferase 1 catalytic activity or at very low levels. This is Palmitoyl thioesterase CPT1C (Cpt1c) from Mus musculus (Mouse).